A 255-amino-acid polypeptide reads, in one-letter code: Hydroxyacylglutathione hydrolase (255 aa).

The Zn(2+) site is built by histidine 53, histidine 55, aspartate 57, histidine 58, histidine 110, aspartate 127, and histidine 165.

This sequence belongs to the metallo-beta-lactamase superfamily. Glyoxalase II family. In terms of assembly, monomer. Zn(2+) is required as a cofactor.

The catalysed reaction is an S-(2-hydroxyacyl)glutathione + H2O = a 2-hydroxy carboxylate + glutathione + H(+). The protein operates within secondary metabolite metabolism; methylglyoxal degradation; (R)-lactate from methylglyoxal: step 2/2. In terms of biological role, thiolesterase that catalyzes the hydrolysis of S-D-lactoyl-glutathione to form glutathione and D-lactic acid. The protein is Hydroxyacylglutathione hydrolase of Xanthomonas euvesicatoria pv. vesicatoria (strain 85-10) (Xanthomonas campestris pv. vesicatoria).